Consider the following 359-residue polypeptide: GTP cyclohydrolase FolE2 (359 aa).

It belongs to the GTP cyclohydrolase IV family.

It carries out the reaction GTP + H2O = 7,8-dihydroneopterin 3'-triphosphate + formate + H(+). It participates in cofactor biosynthesis; 7,8-dihydroneopterin triphosphate biosynthesis; 7,8-dihydroneopterin triphosphate from GTP: step 1/1. Its function is as follows. Converts GTP to 7,8-dihydroneopterin triphosphate. The chain is GTP cyclohydrolase FolE2 from Cereibacter sphaeroides (strain ATCC 17025 / ATH 2.4.3) (Rhodobacter sphaeroides).